Here is a 201-residue protein sequence, read N- to C-terminus: Retinol-binding protein 4 (201 aa).

A signal peptide spans 1-18 (MEWVWALVLLAALGGGSA). Cystine bridges form between cysteine 22–cysteine 178, cysteine 88–cysteine 192, and cysteine 138–cysteine 147. Residue glutamine 116 participates in substrate binding. At arginine 139 the chain carries Omega-N-methylarginine.

The protein belongs to the calycin superfamily. Lipocalin family. As to quaternary structure, interacts with TTR. Interaction with TTR prevents its loss by filtration through the kidney glomeruli. Interacts with STRA6. In terms of tissue distribution, detected in blood plasma (at protein level).

It is found in the secreted. Its function is as follows. Retinol-binding protein that mediates retinol transport in blood plasma. Delivers retinol from the liver stores to the peripheral tissues. Transfers the bound all-trans retinol to STRA6, that then facilitates retinol transport across the cell membrane. The sequence is that of Retinol-binding protein 4 (Rbp4) from Rattus norvegicus (Rat).